We begin with the raw amino-acid sequence, 231 residues long: Dihydropteridine reductase (231 aa).

6–30 (LVLGGSGALGAEVVKFFKSKSWNTI) contacts NADP(+). Y138 functions as the Proton acceptor in the catalytic mechanism.

Belongs to the short-chain dehydrogenases/reductases (SDR) family. As to quaternary structure, homodimer.

The catalysed reaction is 5,6,7,8-tetrahydropteridine + NAD(+) = 6,7-dihydropteridine + NADH + H(+). It carries out the reaction 5,6,7,8-tetrahydropteridine + NADP(+) = 6,7-dihydropteridine + NADPH + H(+). Its function is as follows. The product of this enzyme, tetrahydrobiopterin (BH-4), is an essential cofactor for phenylalanine, tyrosine, and tryptophan hydroxylases. The polypeptide is Dihydropteridine reductase (qdpr) (Dictyostelium discoideum (Social amoeba)).